The primary structure comprises 690 residues: NF-kappa-B-repressing factor (690 aa).

The tract at residues 1 to 296 (MEKILHMAEG…FKHIIGEDLV (296 aa)) is active repression domain. A Nuclear localization signal motif is present at residues 25–45 (KPSKGQKRYLSTYDGQNPPKK). Disordered stretches follow at residues 27 to 49 (SKGQKRYLSTYDGQNPPKKQAGS), 65 to 85 (SSSKAERQEDPYGPQTKDVNG), and 133 to 160 (YFDSGNPAPSSTSQQANCQPAPEPPPSQ). Lysine 68 participates in a covalent cross-link: Glycyl lysine isopeptide (Lys-Gly) (interchain with G-Cter in SUMO2). Residues 139 to 150 (PAPSSTSQQANC) are compositionally biased toward polar residues. The DNA-binding element occupies 296 to 388 (VVCQIGMLSY…RVFLQDHCLA (93 aa)). Over residues 414 to 425 (PTYPSVKSSQCH) the composition is skewed to polar residues. The interval 414 to 436 (PTYPSVKSSQCHSGSSPKGSGKK) is disordered. Lysine 500 is covalently cross-linked (Glycyl lysine isopeptide (Lys-Gly) (interchain with G-Cter in SUMO2)). The G-patch domain maps to 551 to 596 (EDNIGNQLLRKMGWTGGGLGKSGEGIREPISVKEQHKREGLGLDVE). The R3H domain occupies 600–664 (KIAKRDIEQI…DRYLVVGRKR (65 aa)). Residue serine 618 is modified to Phosphoserine. Glycyl lysine isopeptide (Lys-Gly) (interchain with G-Cter in SUMO2) cross-links involve residues lysine 666 and lysine 674.

As to quaternary structure, interacts with NF-kappa-B. Interacts with XRN2. Interacts (via G-patch domain) with DHX15; promoting the RNA helicase activity of DHX15.

The protein resides in the nucleus. It is found in the nucleolus. Enhances the ATPase activity of DHX15 by acting like a brace that tethers mobile sections of DHX15 together, stabilizing a functional conformation with high RNA affinity of DHX15. Involved in the constitutive silencing of the interferon beta promoter, independently of the virus-induced signals, and in the inhibition of the basal and cytokine-induced iNOS promoter activity. Also involved in the regulation of IL-8 transcription. May also act as a DNA-binding transcription regulator: interacts with a specific negative regulatory element (NRE) 5'-AATTCCTCTGA-3' to mediate transcriptional repression of certain NK-kappa-B responsive genes. This chain is NF-kappa-B-repressing factor (Nkrf), found in Mus musculus (Mouse).